Reading from the N-terminus, the 105-residue chain is Phosphoribosyl-AMP cyclohydrolase (105 aa).

D72 lines the Mg(2+) pocket. Residue C73 coordinates Zn(2+). Mg(2+) is bound by residues D74 and D76. 2 residues coordinate Zn(2+): C89 and C96.

Belongs to the PRA-CH family. As to quaternary structure, homodimer. Mg(2+) is required as a cofactor. The cofactor is Zn(2+).

It localises to the cytoplasm. The enzyme catalyses 1-(5-phospho-beta-D-ribosyl)-5'-AMP + H2O = 1-(5-phospho-beta-D-ribosyl)-5-[(5-phospho-beta-D-ribosylamino)methylideneamino]imidazole-4-carboxamide. The protein operates within amino-acid biosynthesis; L-histidine biosynthesis; L-histidine from 5-phospho-alpha-D-ribose 1-diphosphate: step 3/9. Functionally, catalyzes the hydrolysis of the adenine ring of phosphoribosyl-AMP. This Listeria monocytogenes serovar 1/2a (strain ATCC BAA-679 / EGD-e) protein is Phosphoribosyl-AMP cyclohydrolase.